A 157-amino-acid chain; its full sequence is Transcriptional regulator MraZ (157 aa).

2 SpoVT-AbrB domains span residues 7 to 54 (TYEC…PMKE) and 83 to 126 (VRII…DKDL).

It belongs to the MraZ family. In terms of assembly, forms oligomers.

The protein localises to the cytoplasm. It localises to the nucleoid. In Flavobacterium psychrophilum (strain ATCC 49511 / DSM 21280 / CIP 103535 / JIP02/86), this protein is Transcriptional regulator MraZ.